The following is a 195-amino-acid chain: Calcineurin B homologous protein 1 (195 aa).

The N-myristoyl glycine moiety is linked to residue Gly2. A Necessary for association with microtubule and interaction with GAPDH motif is present at residues 2–6; sequence GSRAS. EF-hand domains lie at 26–61, 66–101, 110–145, and 151–186; these read SQIT…AINP, IINA…KSKD, SRSN…MVGV, and QLGS…VDVE. Residues Asp123, Asp125, Asp127, Lys129, and Glu134 each coordinate Ca(2+). A Nuclear export signal 1 motif is present at residues 138-147; sequence VLRMMVGVNI. A necessary for nuclear export signal region spans residues 143–185; that stretch reads VGVNISDEQLGSIADRTIQEADQDGDSAISFTEFVKVLEKVDV. Asp164, Asp166, Asp168, and Glu175 together coordinate Ca(2+). The Nuclear export signal 2 motif lies at 176-185; sequence FVKVLEKVDV.

The protein belongs to the calcineurin regulatory subunit family. CHP subfamily. In terms of assembly, monomer. Interacts with STK17B; the interaction occurs in a calcium-independent manner and induces the translocation of CHP1 from the Golgi to the nucleus. Interacts with GAPDH; the interaction is direct, occurs in a N-myristoylation-dependent manner and facilitates the ability of CHP1 to bind microtubules. Interacts with KIF1B (via the C-terminal end of the kinesin-motor domain); the interaction occurs in a calcium-dependent manner. Associates (via C-terminal domain) with microtubules; the association occurs with polymerized microtubules during the cell cycle in a myristoylation- and calcium-independent manner and is enhanced by GAPDH. Interacts with PPP3CA. Interacts with SLC9A1/NHE1 (via the C-terminal domain); the interaction occurs at the plasma membrane in a calcium-dependent manner and at a domain that is critical for growth factor stimulation of the exchanger. Interacts with SLC9A3; increases SLC9A3 trafficking and activity at the plasma membrane. Post-translationally, phosphorylated; decreased phosphorylation is associated with an increase in SLC9A1/NHE1 Na(+)/H(+) exchange activity. Phosphorylation occurs in serum-dependent manner. The phosphorylation state may regulate the binding to SLC9A1/NHE1. Both N-myristoylation and calcium-mediated conformational changes are essential for its function in exocytic traffic. N-myristoylation is required for its association with microtubules and interaction with GAPDH, but not for the constitutive association to membranes. As to expression, ubiquitously expressed. Has been found in fetal eye, lung, liver, muscle, heart, kidney, thymus and spleen.

Its subcellular location is the nucleus. It is found in the cytoplasm. The protein resides in the cytoskeleton. The protein localises to the endomembrane system. It localises to the endoplasmic reticulum-Golgi intermediate compartment. Its subcellular location is the endoplasmic reticulum. It is found in the cell membrane. The protein resides in the membrane. Functionally, calcium-binding protein involved in different processes such as regulation of vesicular trafficking, plasma membrane Na(+)/H(+) exchanger and gene transcription. Involved in the constitutive exocytic membrane traffic. Mediates the association between microtubules and membrane-bound organelles of the endoplasmic reticulum and Golgi apparatus and is also required for the targeting and fusion of transcytotic vesicles (TCV) with the plasma membrane. Functions as an integral cofactor in cell pH regulation by controlling plasma membrane-type Na(+)/H(+) exchange activity. Affects the pH sensitivity of SLC9A1/NHE1 by increasing its sensitivity at acidic pH. Required for the stabilization and localization of SLC9A1/NHE1 at the plasma membrane. Inhibits serum- and GTPase-stimulated Na(+)/H(+) exchange. Plays a role as an inhibitor of ribosomal RNA transcription by repressing the nucleolar UBF1 transcriptional activity. May sequester UBF1 in the nucleoplasm and limit its translocation to the nucleolus. Associates to the ribosomal gene promoter. Acts as a negative regulator of the calcineurin/NFAT signaling pathway. Inhibits NFAT nuclear translocation and transcriptional activity by suppressing the calcium-dependent calcineurin phosphatase activity. Also negatively regulates the kinase activity of the apoptosis-induced kinase STK17B. Inhibits both STK17B auto- and substrate-phosphorylations in a calcium-dependent manner. The polypeptide is Calcineurin B homologous protein 1 (CHP1) (Homo sapiens (Human)).